The sequence spans 259 residues: Glandular kallikrein-10 (259 aa).

Residues 1–18 (MWFLILFLALSLGGIDAA) form the signal peptide. Residues 19 to 24 (PPGQSR) constitute a propeptide, activation peptide. Positions 25-256 (IVGGYKCEKN…FTSWIKEVMK (232 aa)) constitute a Peptidase S1 domain. Disulfide bonds link Cys31–Cys171, Cys48–Cys64, Cys150–Cys217, Cys182–Cys196, and Cys207–Cys232. Residue His63 is the Charge relay system of the active site. N-linked (GlcNAc...) asparagine glycosylation is found at Asn91 and Asn106. Catalysis depends on Asp118, which acts as the Charge relay system. Ser211 serves as the catalytic Charge relay system.

Belongs to the peptidase S1 family. Kallikrein subfamily. Heterodimer of a light chain and heavy chain linked by a disulfide bond. In terms of processing, probably N- and O-glycosylated. Kidney and submandibular gland, where it is found in the granular convoluted tubule and striated duct cells. It is likely that the enzyme is mainly synthesized in the granular convoluted tubules and then transferred to other tissues by release into the vasculature or interstitial space.

The enzyme catalyses Preferential cleavage of Arg-|-Xaa bonds in small molecule substrates. Highly selective action to release kallidin (lysyl-bradykinin) from kininogen involves hydrolysis of Met-|-Xaa or Leu-|-Xaa.. Its function is as follows. Glandular kallikreins cleave Met-Lys and Arg-Ser bonds in kininogen to release Lys-bradykinin. This protein may be involved in the regulation of renal function. In Rattus norvegicus (Rat), this protein is Glandular kallikrein-10 (Klk10).